The primary structure comprises 1027 residues: Multidrug resistance protein MdtC (1027 aa).

The next 12 membrane-spanning stretches (helical) occupy residues 16-36, 333-353, 360-380, 387-407, 431-451, 463-483, 528-548, 853-873, 875-895, 897-917, 953-973, and 984-1004; these read LLSL…PVAP, EVER…FLFL, LIPA…MYLC, LSLM…IVVL, VGFT…PLLL, FAIT…TLTP, WIMA…ISAP, LILI…LYES, IHPL…LLAL, LFDT…IGIV, PIIM…LSSG, and ITIV…TPII.

The protein belongs to the resistance-nodulation-cell division (RND) (TC 2.A.6) family. MdtC subfamily. In terms of assembly, part of a tripartite efflux system composed of MdtA, MdtB and MdtC. MdtC forms a heteromultimer with MdtB.

It is found in the cell inner membrane. The sequence is that of Multidrug resistance protein MdtC from Proteus mirabilis (strain HI4320).